We begin with the raw amino-acid sequence, 104 residues long: DNA-directed RNA polymerase subunit omega (104 aa).

The protein belongs to the RNA polymerase subunit omega family. In terms of assembly, the RNAP catalytic core consists of 2 alpha, 1 beta, 1 beta' and 1 omega subunit. When a sigma factor is associated with the core the holoenzyme is formed, which can initiate transcription.

It carries out the reaction RNA(n) + a ribonucleoside 5'-triphosphate = RNA(n+1) + diphosphate. Functionally, promotes RNA polymerase assembly. Latches the N- and C-terminal regions of the beta' subunit thereby facilitating its interaction with the beta and alpha subunits. This Streptococcus suis (strain 05ZYH33) protein is DNA-directed RNA polymerase subunit omega.